The primary structure comprises 70 residues: NAD(P)H-quinone oxidoreductase subunit L (70 aa).

2 consecutive transmembrane segments (helical) span residues 2–22 (IVAL…PIAV) and 39–59 (LLMY…SPFA).

Belongs to the complex I NdhL subunit family. NDH-1 can be composed of about 15 different subunits; different subcomplexes with different compositions have been identified which probably have different functions.

The protein localises to the cellular thylakoid membrane. It carries out the reaction a plastoquinone + NADH + (n+1) H(+)(in) = a plastoquinol + NAD(+) + n H(+)(out). The catalysed reaction is a plastoquinone + NADPH + (n+1) H(+)(in) = a plastoquinol + NADP(+) + n H(+)(out). Its function is as follows. NDH-1 shuttles electrons from an unknown electron donor, via FMN and iron-sulfur (Fe-S) centers, to quinones in the respiratory and/or the photosynthetic chain. The immediate electron acceptor for the enzyme in this species is believed to be plastoquinone. Couples the redox reaction to proton translocation, and thus conserves the redox energy in a proton gradient. Cyanobacterial NDH-1 also plays a role in inorganic carbon-concentration. This Nostoc punctiforme (strain ATCC 29133 / PCC 73102) protein is NAD(P)H-quinone oxidoreductase subunit L.